Reading from the N-terminus, the 132-residue chain is MEAIKADITQGLEKGSLITCADNTGARELKITSVMGYQGRKNRHPKAGLGDTITVSVTKGTPEMRRQVLEAVVVRQRKPIRRPDGTRVKFEDNAAVIIDDLGEPRGTEIKGPISREVAERYGTIASTATMIV.

Belongs to the universal ribosomal protein uL14 family. Part of the 50S ribosomal subunit. Forms a cluster with proteins L3 and L24e, part of which may contact the 16S rRNA in 2 intersubunit bridges.

In terms of biological role, binds to 23S rRNA. Forms part of two intersubunit bridges in the 70S ribosome. In Halobacterium salinarum (strain ATCC 29341 / DSM 671 / R1), this protein is Large ribosomal subunit protein uL14.